Here is a 573-residue protein sequence, read N- to C-terminus: Probable D-xylulose kinase A (573 aa).

Substrate-binding residues include His97, Arg168, Asp284, and Asn285. ATP contacts are provided by residues Trp366, 471 to 472 (GG), and Asn475.

It belongs to the FGGY kinase family.

The protein resides in the cytoplasm. The enzyme catalyses D-xylulose + ATP = D-xylulose 5-phosphate + ADP + H(+). Functionally, highly specific D-xylulose kinase which participates in the catabolism of xylose. Xylose is a major component of hemicelluloses such as xylan. Most fungi utilize D-xylose via three enzymatic reactions, xylose reductase (XR), xylitol dehydrogenase (XDH), and xylulokinase, to form xylulose 5-phosphate, which enters pentose phosphate pathway. The sequence is that of Probable D-xylulose kinase A (xkiA) from Aspergillus clavatus (strain ATCC 1007 / CBS 513.65 / DSM 816 / NCTC 3887 / NRRL 1 / QM 1276 / 107).